Here is a 254-residue protein sequence, read N- to C-terminus: N-acetylglucosaminyldiphosphoundecaprenol N-acetyl-beta-D-mannosaminyltransferase (254 aa).

The protein belongs to the glycosyltransferase 26 family. TagA/TarA subfamily.

The enzyme catalyses UDP-N-acetyl-alpha-D-mannosamine + N-acetyl-alpha-D-glucosaminyl-di-trans,octa-cis-undecaprenyl diphosphate = N-acetyl-beta-D-mannosaminyl-(1-&gt;4)-N-acetyl-alpha-D-glucosaminyl di-trans,octa-cis-undecaprenyl diphosphate + UDP + H(+). It participates in cell wall biogenesis; poly(ribitol phosphate) teichoic acid biosynthesis. In terms of biological role, catalyzes the conversion of GlcNAc-PP-undecaprenol into ManNAc-GlcNAc-PP-undecaprenol, the first committed lipid intermediate in the de novo synthesis of teichoic acid. The sequence is that of N-acetylglucosaminyldiphosphoundecaprenol N-acetyl-beta-D-mannosaminyltransferase from Staphylococcus aureus (strain NCTC 8325 / PS 47).